The chain runs to 60 residues: Andropin (60 aa).

The signal sequence occupies residues 1 to 23 (MKYFVVLVVLALILAIAVGPSDA).

This sequence belongs to the andropin family. In terms of tissue distribution, ejaculatory duct of adult males.

The protein localises to the secreted. In terms of biological role, male-specific peptide with moderate activity against Gram-positive bacteria. The polypeptide is Andropin (Anp) (Drosophila simulans (Fruit fly)).